Here is a 146-residue protein sequence, read N- to C-terminus: uncharacterized protein (146 aa).

The 140-residue stretch at leucine 7 to proline 146 folds into the N-acetyltransferase domain.

This is an uncharacterized protein from Staphylococcus epidermidis (strain ATCC 12228 / FDA PCI 1200).